The primary structure comprises 146 residues: uncharacterized protein (146 aa).

In terms of domain architecture, Toprim spans 31 to 119 (EKVMIVEGKS…RAYKEVAAAP (89 aa)).

This is an uncharacterized protein from Bacillus subtilis (strain 168).